A 270-amino-acid polypeptide reads, in one-letter code: tRNA pseudouridine synthase A (270 aa).

D60 acts as the Nucleophile in catalysis. The interval 107 to 111 (FHARF) is RNA binding. Residue Y118 participates in substrate binding. Positions 168 to 172 (QCQSR) are interaction with tRNA.

Belongs to the tRNA pseudouridine synthase TruA family. In terms of assembly, homodimer.

It carries out the reaction uridine(38/39/40) in tRNA = pseudouridine(38/39/40) in tRNA. In terms of biological role, formation of pseudouridine at positions 38, 39 and 40 in the anticodon stem and loop of transfer RNAs. The protein is tRNA pseudouridine synthase A of Shigella boydii serotype 4 (strain Sb227).